The following is a 270-amino-acid chain: MLAKRIIPCLDVKDGRVVKGVRFVGLRDAGDPVEAARRYDAEGADEITFLDITASHEKRGIILDVVARTAEVLFTPLTVGGGVKSEQDIKALLDAGADKVAINTAAVNDPDLVRRAADRWGAQAIVVAIDARRIADPSRVAWTVVTHGGRRDTGRDAVAWAEEIARAGAGELLVTSMDRDGTRDGYDLLLTAAIARAVPVPVIASGGVGTLDHLRAGLVEGGADAALAASIFHDAEYTIGEAKAYLEAAGVPVRPARAGGPGDAASRGRS.

Catalysis depends on residues Asp11 and Asp130.

This sequence belongs to the HisA/HisF family. Heterodimer of HisH and HisF.

It localises to the cytoplasm. It catalyses the reaction 5-[(5-phospho-1-deoxy-D-ribulos-1-ylimino)methylamino]-1-(5-phospho-beta-D-ribosyl)imidazole-4-carboxamide + L-glutamine = D-erythro-1-(imidazol-4-yl)glycerol 3-phosphate + 5-amino-1-(5-phospho-beta-D-ribosyl)imidazole-4-carboxamide + L-glutamate + H(+). It functions in the pathway amino-acid biosynthesis; L-histidine biosynthesis; L-histidine from 5-phospho-alpha-D-ribose 1-diphosphate: step 5/9. In terms of biological role, IGPS catalyzes the conversion of PRFAR and glutamine to IGP, AICAR and glutamate. The HisF subunit catalyzes the cyclization activity that produces IGP and AICAR from PRFAR using the ammonia provided by the HisH subunit. This is Imidazole glycerol phosphate synthase subunit HisF from Sorangium cellulosum (strain So ce56) (Polyangium cellulosum (strain So ce56)).